Here is a 223-residue protein sequence, read N- to C-terminus: MTPTRAQLAAFVDHTLLKPEATAADVAALVTEAAELGVYAVCVSPPMVPAAVQAGAGVRVASVAGFPSGKHVSAVKAHEAALAVASGAAEIDMVIDVGAALAGDLDGVRADIAAVRGAVGGAVLKVIVESSALLALADEHTLVRVCRAAEDAGADFVKTSTGFHPSGGASVRAVALMAEAVGGRLGVKASGGIRTAADALAMLDAGATRLGLSGTRAVLDGLG.

The Proton donor/acceptor role is filled by D92. K158 acts as the Schiff-base intermediate with acetaldehyde in catalysis. K188 (proton donor/acceptor) is an active-site residue.

The protein belongs to the DeoC/FbaB aldolase family. DeoC type 1 subfamily.

It is found in the cytoplasm. It carries out the reaction 2-deoxy-D-ribose 5-phosphate = D-glyceraldehyde 3-phosphate + acetaldehyde. The protein operates within carbohydrate degradation; 2-deoxy-D-ribose 1-phosphate degradation; D-glyceraldehyde 3-phosphate and acetaldehyde from 2-deoxy-alpha-D-ribose 1-phosphate: step 2/2. Its function is as follows. Catalyzes a reversible aldol reaction between acetaldehyde and D-glyceraldehyde 3-phosphate to generate 2-deoxy-D-ribose 5-phosphate. The polypeptide is Deoxyribose-phosphate aldolase (Mycobacterium avium (strain 104)).